The primary structure comprises 97 residues: UPF0390 protein CNBD1430 (97 aa).

2 disordered regions span residues 1 to 57 and 75 to 97; these read MAQG…INNS and RNVG…GKSR. Positions 29–46 are enriched in basic and acidic residues; it reads GKREVAPKDRQRVLERSQ. The segment covering 48–57 has biased composition (polar residues); sequence KQLSSKINNS.

This sequence belongs to the UPF0390 family.

The chain is UPF0390 protein CNBD1430 from Cryptococcus neoformans var. neoformans serotype D (strain B-3501A) (Filobasidiella neoformans).